The sequence spans 91 residues: Elongation factor 1-beta (91 aa).

This sequence belongs to the EF-1-beta/EF-1-delta family.

In terms of biological role, promotes the exchange of GDP for GTP in EF-1-alpha/GDP, thus allowing the regeneration of EF-1-alpha/GTP that could then be used to form the ternary complex EF-1-alpha/GTP/AAtRNA. The sequence is that of Elongation factor 1-beta from Pyrococcus furiosus (strain ATCC 43587 / DSM 3638 / JCM 8422 / Vc1).